The primary structure comprises 229 residues: Purine nucleoside phosphorylase BB_0467 (229 aa).

Residues His-55, Cys-91, and His-108 each contribute to the Zn(2+) site.

The protein belongs to the purine nucleoside phosphorylase YfiH/LACC1 family. In terms of assembly, homodimer. It depends on Cu(2+) as a cofactor. The cofactor is Zn(2+).

It carries out the reaction adenosine + phosphate = alpha-D-ribose 1-phosphate + adenine. The catalysed reaction is S-methyl-5'-thioadenosine + phosphate = 5-(methylsulfanyl)-alpha-D-ribose 1-phosphate + adenine. The enzyme catalyses inosine + phosphate = alpha-D-ribose 1-phosphate + hypoxanthine. It catalyses the reaction adenosine + H2O + H(+) = inosine + NH4(+). Functionally, purine nucleoside enzyme that catalyzes the phosphorolysis of adenosine and inosine nucleosides, yielding D-ribose 1-phosphate and the respective free bases, adenine and hypoxanthine. Also catalyzes the phosphorolysis of S-methyl-5'-thioadenosine into adenine and S-methyl-5-thio-alpha-D-ribose 1-phosphate. Also has adenosine deaminase activity. This is Purine nucleoside phosphorylase BB_0467 from Borreliella burgdorferi (strain ATCC 35210 / DSM 4680 / CIP 102532 / B31) (Borrelia burgdorferi).